Reading from the N-terminus, the 276-residue chain is Large ribosomal subunit protein uL2 (276 aa).

Disordered stretches follow at residues 34-55 (LQPLKNNAGRNNNGRITVRHQG) and 221-276 (RGSV…RRTK). A compositionally biased stretch (polar residues) spans 37-48 (LKNNAGRNNNGR).

Belongs to the universal ribosomal protein uL2 family. Part of the 50S ribosomal subunit. Forms a bridge to the 30S subunit in the 70S ribosome.

Its function is as follows. One of the primary rRNA binding proteins. Required for association of the 30S and 50S subunits to form the 70S ribosome, for tRNA binding and peptide bond formation. It has been suggested to have peptidyltransferase activity; this is somewhat controversial. Makes several contacts with the 16S rRNA in the 70S ribosome. The chain is Large ribosomal subunit protein uL2 from Enterococcus faecalis (strain ATCC 700802 / V583).